A 154-amino-acid polypeptide reads, in one-letter code: Myoglobin (154 aa).

A Globin domain is found at 2 to 148 (GLSDQEWQHV…FRNDMASKYK (147 aa)). Residue His-65 participates in nitrite binding. O2 is bound at residue His-65. Residue His-94 coordinates heme b.

Monomeric.

It is found in the cytoplasm. It localises to the sarcoplasm. The enzyme catalyses Fe(III)-heme b-[protein] + nitric oxide + H2O = Fe(II)-heme b-[protein] + nitrite + 2 H(+). It catalyses the reaction H2O2 + AH2 = A + 2 H2O. Its function is as follows. Monomeric heme protein which primary function is to store oxygen and facilitate its diffusion within muscle tissues. Reversibly binds oxygen through a pentacoordinated heme iron and enables its timely and efficient release as needed during periods of heightened demand. Depending on the oxidative conditions of tissues and cells, and in addition to its ability to bind oxygen, it also has a nitrite reductase activity whereby it regulates the production of bioactive nitric oxide. Under stress conditions, like hypoxia and anoxia, it also protects cells against reactive oxygen species thanks to its pseudoperoxidase activity. The sequence is that of Myoglobin from Dromaius novaehollandiae (Emu).